We begin with the raw amino-acid sequence, 406 residues long: Argininosuccinate synthase (406 aa).

8 to 16 (AYSGGLDTS) provides a ligand contact to ATP. L-citrulline is bound at residue tyrosine 86. Glycine 116 contacts ATP. Residues threonine 118, asparagine 122, and aspartate 123 each contribute to the L-aspartate site. L-citrulline is bound at residue asparagine 122. L-citrulline is bound by residues arginine 126, serine 174, serine 183, glutamate 259, and tyrosine 271.

It belongs to the argininosuccinate synthase family. Type 1 subfamily. Homotetramer.

It is found in the cytoplasm. The enzyme catalyses L-citrulline + L-aspartate + ATP = 2-(N(omega)-L-arginino)succinate + AMP + diphosphate + H(+). Its pathway is amino-acid biosynthesis; L-arginine biosynthesis; L-arginine from L-ornithine and carbamoyl phosphate: step 2/3. This is Argininosuccinate synthase from Oenococcus oeni (strain ATCC BAA-331 / PSU-1).